The sequence spans 303 residues: Leukocyte immunoglobulin-like receptor subfamily B member 4B (303 aa).

The signal sequence occupies residues 1–23 (MIAMLTVLLYLALILEPRTAVQA). Over 24–238 (GHLPKPIIWA…TEDGLETYQK (215 aa)) the chain is Extracellular. 2 Ig-like C2-type domains span residues 42–123 (YTSV…AYEN) and 124–212 (PSLS…KPSN). A disulfide bridge connects residues Cys49 and Cys98. Residues Asn79, Asn133, and Asn191 are each glycosylated (N-linked (GlcNAc...) asparagine). Residues Cys144 and Cys196 are joined by a disulfide bond. Residues 239–260 (ILIGVLVSFLLLFFLLLFLILI) traverse the membrane as a helical segment. Topologically, residues 261-303 (GYQCRHKNKANASVKNTQSEDNAELNSWNPQNEDPPRELCTPR) are cytoplasmic. The segment covering 275–292 (KNTQSEDNAELNSWNPQN) has biased composition (polar residues). Positions 275-303 (KNTQSEDNAELNSWNPQNEDPPRELCTPR) are disordered.

As to quaternary structure, monomer and homodimer. In terms of tissue distribution, expressed on mast cells (at protein level). Also expressed at much lower levels on natural killer cells (at protein level).

The protein localises to the cell membrane. Functionally, plays a role in mast cell activation. In Mus musculus (Mouse), this protein is Leukocyte immunoglobulin-like receptor subfamily B member 4B.